The primary structure comprises 247 residues: Type III pantothenate kinase (247 aa).

7–14 (AIGNSRWH) contributes to the ATP binding site. Residues Y91 and 95–98 (GLDR) contribute to the substrate site. D97 acts as the Proton acceptor in catalysis. D117 is a binding site for K(+). T120 is an ATP binding site. T172 is a binding site for substrate.

The protein belongs to the type III pantothenate kinase family. Homodimer. NH4(+) serves as cofactor. The cofactor is K(+).

Its subcellular location is the cytoplasm. It catalyses the reaction (R)-pantothenate + ATP = (R)-4'-phosphopantothenate + ADP + H(+). It functions in the pathway cofactor biosynthesis; coenzyme A biosynthesis; CoA from (R)-pantothenate: step 1/5. Catalyzes the phosphorylation of pantothenate (Pan), the first step in CoA biosynthesis. The sequence is that of Type III pantothenate kinase from Synechococcus elongatus (strain ATCC 33912 / PCC 7942 / FACHB-805) (Anacystis nidulans R2).